Reading from the N-terminus, the 156-residue chain is Protein-export protein SecB (156 aa).

The protein belongs to the SecB family. Homotetramer, a dimer of dimers. One homotetramer interacts with 1 SecA dimer.

The protein localises to the cytoplasm. One of the proteins required for the normal export of preproteins out of the cell cytoplasm. It is a molecular chaperone that binds to a subset of precursor proteins, maintaining them in a translocation-competent state. It also specifically binds to its receptor SecA. This chain is Protein-export protein SecB, found in Xanthobacter autotrophicus (strain ATCC BAA-1158 / Py2).